Consider the following 103-residue polypeptide: Putative double-stranded DNA mimic protein HAPS_1002 (103 aa).

Belongs to the putative dsDNA mimic protein family.

In terms of biological role, may act as a double-stranded DNA (dsDNA) mimic. Probably regulates the activity of a dsDNA-binding protein. The sequence is that of Putative double-stranded DNA mimic protein HAPS_1002 from Glaesserella parasuis serovar 5 (strain SH0165) (Haemophilus parasuis).